The sequence spans 191 residues: Glycerol-3-phosphate acyltransferase (191 aa).

A run of 5 helical transmembrane segments spans residues 3–23 (YLIVALSSYLLGSIPFGFILT), 51–71 (TLGYATLLLDITKAVLPVLYV), 78–98 (YIFIASLSAFLGHVFPIWLKF), 108–128 (VGILFSINIFLGLVFIISWAV), and 150–170 (YLIVFENYNSIFFIIMFVLIF).

This sequence belongs to the PlsY family. In terms of assembly, probably interacts with PlsX.

Its subcellular location is the cell inner membrane. The catalysed reaction is an acyl phosphate + sn-glycerol 3-phosphate = a 1-acyl-sn-glycero-3-phosphate + phosphate. It functions in the pathway lipid metabolism; phospholipid metabolism. Functionally, catalyzes the transfer of an acyl group from acyl-phosphate (acyl-PO(4)) to glycerol-3-phosphate (G3P) to form lysophosphatidic acid (LPA). This enzyme utilizes acyl-phosphate as fatty acyl donor, but not acyl-CoA or acyl-ACP. The polypeptide is Glycerol-3-phosphate acyltransferase (Pelagibacter ubique (strain HTCC1062)).